Consider the following 507-residue polypeptide: MSIRPDEITSILKNQIEQYQLEVEMAEVGTVTQVGDGIARIYGLDRAMAGELLEFPGDIYGMVLNLEEDNVGAVILGPYTHIKEGDQVKRTGRIVEVPVGEALIGRVVNAMGQPIDGKGPIQTDKFRPVESPAPGVVYRQPVNTPLQTGLKAIDSMVPIGRGQRELIIGDRQTGKTAIAVDTIINQKGQNVICIYVAIGQKASTVAGVVQRLEEAGAMEYTIVVMATASEPAPMLYIAPYAGCTMGEYFMYEQHRDVLCVYDDLSKHAAAYRELSLLLRRPPGREAYPGDVFYLHSRLLERAARLNDSLGGGSLTALPVIETQAGDVSAYIPTNVISITDGQIFLESDLFYAGQRPAINVGLSVSRVGGAAQIKAMKQVAGRLRLDLAQYRELAAFAQFGSDLDKATQARLARGERMMEILKQDQYQPMPVEEQVVVLYAAVNGFLDDLPVARVRAFEKDFLRFLRNERPEVLAGIREKRQLDDNLQEQLKKSIEDFKGSFTAAGES.

Glycine 169–threonine 176 lines the ATP pocket.

Belongs to the ATPase alpha/beta chains family. F-type ATPases have 2 components, CF(1) - the catalytic core - and CF(0) - the membrane proton channel. CF(1) has five subunits: alpha(3), beta(3), gamma(1), delta(1), epsilon(1). CF(0) has three main subunits: a(1), b(2) and c(9-12). The alpha and beta chains form an alternating ring which encloses part of the gamma chain. CF(1) is attached to CF(0) by a central stalk formed by the gamma and epsilon chains, while a peripheral stalk is formed by the delta and b chains. In this bacterium the a and b subunits are transcribed but do not seem to be translated, thus the ATP synthase consists of the alpha, beta, gamma, delta, epsilon and c subunits.

Its subcellular location is the cell membrane. It catalyses the reaction ATP + H2O + 4 H(+)(in) = ADP + phosphate + 5 H(+)(out). Produces ATP from ADP in the presence of a proton gradient across the membrane. The alpha chain is a regulatory subunit. This is ATP synthase subunit alpha from Moorella thermoacetica (strain ATCC 39073 / JCM 9320).